A 600-amino-acid polypeptide reads, in one-letter code: MIKENLENELKTLPNSAGVYQYFNQEGKLLYVGKAKNLKNRVKSYFAFTPNLHANPRNSLRIQKMIEETVHLEFIATNSEADALILENSFIKQLHPKYNILLRDDKTYPYIYVDFEEEFPRFEITRKLVKKSKIKYFGPFFKGARELLDALYLYYPLKQKASCKSPCIFYQISRCLAPCDKLISREKYLEILDEAIHALLNPSVLLKNLEKQMLVLAQNENYEEAAKVRDQIAMIKDLEVKVEIDIAKLEDFEVFALAFKNSVLSTLRFVVQNGKIISANSKITPIRNDIQWDQNEIYKQLILENFSMDIPLLANVIYVYEEFEDRVLLEEILSQRFDKKISIKIPKIGEKRRICDLAFQNALLNIEKEQKNHDFTIQKELKFYFELENLPNDIEIFDNSHLQGVANVGAMVTYRINSWDKSKYRKFHLKHKNDYDQMREVLTRRALDFDKIPPPDLWLIDGGKALLDLAKEIIVSSGANVDILAISKEKIDAKAHRAKGGAKDKIHSLKGEFSLSINDKKLQFLQKLRDEAHRFAISFHQNTKKKQDLKSSKLANLGLSSGVIQKLLAYYGNFESIYKADFKDLTMLVGRKAAQKIKEN.

Residues 15–100 (NSAGVYQYFN…IKQLHPKYNI (86 aa)) form the GIY-YIG domain. A UVR domain is found at 203–238 (SVLLKNLEKQMLVLAQNENYEEAAKVRDQIAMIKDL).

This sequence belongs to the UvrC family. Interacts with UvrB in an incision complex.

Its subcellular location is the cytoplasm. Its function is as follows. The UvrABC repair system catalyzes the recognition and processing of DNA lesions. UvrC both incises the 5' and 3' sides of the lesion. The N-terminal half is responsible for the 3' incision and the C-terminal half is responsible for the 5' incision. The protein is UvrABC system protein C of Campylobacter jejuni (strain RM1221).